Consider the following 276-residue polypeptide: Dermonecrotic toxin LlSicTox-alphaIV1ii (276 aa).

H5 is an active-site residue. Mg(2+)-binding residues include E25 and D27. Residue H41 is the Nucleophile of the active site. 2 disulfide bridges follow: C45–C51 and C47–C193. D85 provides a ligand contact to Mg(2+).

This sequence belongs to the arthropod phospholipase D family. Class II subfamily. It depends on Mg(2+) as a cofactor. Expressed by the venom gland.

The protein localises to the secreted. The catalysed reaction is an N-(acyl)-sphingosylphosphocholine = an N-(acyl)-sphingosyl-1,3-cyclic phosphate + choline. The enzyme catalyses an N-(acyl)-sphingosylphosphoethanolamine = an N-(acyl)-sphingosyl-1,3-cyclic phosphate + ethanolamine. It carries out the reaction a 1-acyl-sn-glycero-3-phosphocholine = a 1-acyl-sn-glycero-2,3-cyclic phosphate + choline. It catalyses the reaction a 1-acyl-sn-glycero-3-phosphoethanolamine = a 1-acyl-sn-glycero-2,3-cyclic phosphate + ethanolamine. Functionally, dermonecrotic toxins cleave the phosphodiester linkage between the phosphate and headgroup of certain phospholipids (sphingolipid and lysolipid substrates), forming an alcohol (often choline) and a cyclic phosphate. This toxin acts on sphingomyelin (SM). It may also act on ceramide phosphoethanolamine (CPE), lysophosphatidylcholine (LPC) and lysophosphatidylethanolamine (LPE), but not on lysophosphatidylserine (LPS), and lysophosphatidylglycerol (LPG). It acts by transphosphatidylation, releasing exclusively cyclic phosphate products as second products. Induces dermonecrosis, hemolysis, increased vascular permeability, edema, inflammatory response, and platelet aggregation. The chain is Dermonecrotic toxin LlSicTox-alphaIV1ii from Loxosceles laeta (South American recluse spider).